The sequence spans 438 residues: Putative galacturan 1,4-alpha-galacturonidase A (438 aa).

The N-terminal stretch at 1–21 (MRMPSAISIGVFAGLSLAASA) is a signal peptide. N28, N102, N111, and N197 each carry an N-linked (GlcNAc...) asparagine glycan. PbH1 repeat units lie at residues 186 to 222 (SSHI…DTYR) and 223 to 244 (SDHI…AFKG). The Proton donor role is filled by D237. 7 N-linked (GlcNAc...) asparagine glycosylation sites follow: N245, N253, N279, N325, N353, N372, and N388. PbH1 repeat units follow at residues 246–266 (STNI…AFGS), 277–303 (VENV…YFKS), and 323–344 (VRNV…YIDT). The cysteines at positions 397 and 403 are disulfide-linked. N418 carries an N-linked (GlcNAc...) asparagine glycan.

Belongs to the glycosyl hydrolase 28 family.

The protein localises to the secreted. It carries out the reaction [(1-&gt;4)-alpha-D-galacturonosyl](n) + H2O = alpha-D-galacturonate + [(1-&gt;4)-alpha-D-galacturonosyl](n-1). Specific in hydrolyzing the terminal glycosidic bond of polygalacturonic acid and oligogalacturonates. The protein is Putative galacturan 1,4-alpha-galacturonidase A (rgxA) of Aspergillus niger.